The primary structure comprises 294 residues: Nucleotide-binding protein Dtur_1129 (294 aa).

Residue 10-17 participates in ATP binding; sequence GLSGAGKS. 61-64 provides a ligand contact to GTP; it reads DIRT.

The protein belongs to the RapZ-like family.

In terms of biological role, displays ATPase and GTPase activities. The polypeptide is Nucleotide-binding protein Dtur_1129 (Dictyoglomus turgidum (strain DSM 6724 / Z-1310)).